Reading from the N-terminus, the 299-residue chain is Lymphocyte antigen 6 complex locus protein G6f (299 aa).

The N-terminal stretch at 1–19 (MAVLFLLLLFLCGLPQAET) is a signal peptide. Residues 20 to 124 (DSIQAIYVVL…YRYQNWRVYD (105 aa)) enclose the Ig-like V-type domain. The Extracellular portion of the chain corresponds to 20–237 (DSIQAIYVVL…APSADWDVAW (218 aa)). A disulfide bridge links Cys-37 with Cys-108. An N-linked (GlcNAc...) asparagine glycan is attached at Asn-90. Residues 238–258 (ILTLLLTVGQGFTIVVLGVML) traverse the membrane as a helical segment. The Cytoplasmic portion of the chain corresponds to 259 to 299 (WRQRAQGAQHRNASFPQFKPEIQVYENIHLAHLSPPAPKTR). Phosphotyrosine is present on Tyr-283.

Homodimer; disulfide-linked. Interacts with GRB2 and GRB7 in a phosphorylation-dependent manner. Post-translationally, N-glycosylated.

Its subcellular location is the cell membrane. In terms of biological role, may play a role in the downstream signal transduction pathways involving GRB2 and GRB7. This is Lymphocyte antigen 6 complex locus protein G6f (LY6G6F) from Bos taurus (Bovine).